The primary structure comprises 574 residues: Cyclomaltodextrinase (574 aa).

Positions 144, 146, 149, 150, 168, and 170 each coordinate Ca(2+). The substrate site is built by H243 and R323. The Nucleophile role is filled by D325. E354 functions as the Proton donor in the catalytic mechanism. Residues 420 to 421 (HD), D465, and R469 each bind substrate.

Belongs to the glycosyl hydrolase 13 family. Monomer. The cofactor is Ca(2+).

The enzyme catalyses cyclomaltodextrin + H2O = linear maltodextrin. Functionally, hydrolyzes cyclodextrins. Can also act on linear maltodextrins, with the exception of maltose. The protein is Cyclomaltodextrinase of Thermoanaerobacter pseudethanolicus (strain ATCC 33223 / 39E) (Clostridium thermohydrosulfuricum).